A 199-amino-acid chain; its full sequence is dITP/XTP pyrophosphatase (199 aa).

Residue 7 to 12 (SNNPGK) coordinates substrate. Catalysis depends on aspartate 68, which acts as the Proton acceptor. Aspartate 68 is a binding site for Mg(2+). Residues alanine 69, 154–157 (FGFD), lysine 177, and 182–183 (HR) contribute to the substrate site.

Belongs to the HAM1 NTPase family. Homodimer. The cofactor is Mg(2+).

It catalyses the reaction XTP + H2O = XMP + diphosphate + H(+). The catalysed reaction is dITP + H2O = dIMP + diphosphate + H(+). The enzyme catalyses ITP + H2O = IMP + diphosphate + H(+). Functionally, pyrophosphatase that catalyzes the hydrolysis of nucleoside triphosphates to their monophosphate derivatives, with a high preference for the non-canonical purine nucleotides XTP (xanthosine triphosphate), dITP (deoxyinosine triphosphate) and ITP. Seems to function as a house-cleaning enzyme that removes non-canonical purine nucleotides from the nucleotide pool, thus preventing their incorporation into DNA/RNA and avoiding chromosomal lesions. This Verminephrobacter eiseniae (strain EF01-2) protein is dITP/XTP pyrophosphatase.